Consider the following 205-residue polypeptide: Helix-loop-helix protein 4 (205 aa).

The interval 3 to 16 (MVVAKRNARERTRV) is basic motif. The 54-residue stretch at 3–56 (MVVAKRNARERTRVHTVNQAFLVLKQHLPSLRQFTKRVSKLRILNAAITYIDTL) folds into the bHLH domain. The segment at 17-56 (HTVNQAFLVLKQHLPSLRQFTKRVSKLRILNAAITYIDTL) is helix-loop-helix motif.

Expressed in the ADL sensory neurons.

The protein localises to the nucleus. Its function is as follows. Acts as a transcriptional regulator. May mediate transcriptional activation by binding to the E-box motif 5'-CANNTG-3'. Required for the correct morphology, terminal identity and function of the ADL sensory neurons by controlling the expression of the ADL-specific gene repertoire, including chemoreceptor encoding genes, ion channel encoding genes, neuropeptides and the neurotransmitter eat-4. Regulates the expression of the srh-234 chemoreceptor encoding gene in the ADL neurons under feeding conditions. Plays a role in the chemorepulsive response toward ascaroside pheromones mediated by the ADL sensory neurons. This chain is Helix-loop-helix protein 4 (hlh-4), found in Caenorhabditis elegans.